The chain runs to 404 residues: Argininosuccinate synthase (404 aa).

ATP contacts are provided by residues 10 to 18 and Ala-38; that span reads AYSGGVDTS. Position 89 (Tyr-89) interacts with L-citrulline. Gly-119 provides a ligand contact to ATP. Thr-121, Asn-125, and Asp-126 together coordinate L-aspartate. Asn-125 is a binding site for L-citrulline. Residues Arg-129, Ser-177, Ser-186, Glu-262, and Tyr-274 each coordinate L-citrulline.

It belongs to the argininosuccinate synthase family. Type 1 subfamily. In terms of assembly, homotetramer.

It is found in the cytoplasm. The enzyme catalyses L-citrulline + L-aspartate + ATP = 2-(N(omega)-L-arginino)succinate + AMP + diphosphate + H(+). The protein operates within amino-acid biosynthesis; L-arginine biosynthesis; L-arginine from L-ornithine and carbamoyl phosphate: step 2/3. This is Argininosuccinate synthase from Prochlorococcus marinus (strain AS9601).